A 491-amino-acid chain; its full sequence is Ketol-acid reductoisomerase (NADP(+)) (491 aa).

The 194-residue stretch at 15-208 (AQLGKCRFMG…GGHRAGVLES (194 aa)) folds into the KARI N-terminal Rossmann domain. NADP(+)-binding positions include 45-48 (CGAQ), Arg-68, Arg-76, Ser-78, and 108-110 (DKQ). His-132 is an active-site residue. Gly-158 serves as a coordination point for NADP(+). 2 KARI C-terminal knotted domains span residues 209 to 344 (SFVA…TAPQ) and 345 to 484 (YEGK…MTDM). Residues Asp-217, Glu-221, Glu-389, and Glu-393 each contribute to the Mg(2+) site. Position 414 (Ser-414) interacts with substrate.

This sequence belongs to the ketol-acid reductoisomerase family. It depends on Mg(2+) as a cofactor.

It carries out the reaction (2R)-2,3-dihydroxy-3-methylbutanoate + NADP(+) = (2S)-2-acetolactate + NADPH + H(+). The catalysed reaction is (2R,3R)-2,3-dihydroxy-3-methylpentanoate + NADP(+) = (S)-2-ethyl-2-hydroxy-3-oxobutanoate + NADPH + H(+). It functions in the pathway amino-acid biosynthesis; L-isoleucine biosynthesis; L-isoleucine from 2-oxobutanoate: step 2/4. It participates in amino-acid biosynthesis; L-valine biosynthesis; L-valine from pyruvate: step 2/4. Involved in the biosynthesis of branched-chain amino acids (BCAA). Catalyzes an alkyl-migration followed by a ketol-acid reduction of (S)-2-acetolactate (S2AL) to yield (R)-2,3-dihydroxy-isovalerate. In the isomerase reaction, S2AL is rearranged via a Mg-dependent methyl migration to produce 3-hydroxy-3-methyl-2-ketobutyrate (HMKB). In the reductase reaction, this 2-ketoacid undergoes a metal-dependent reduction by NADPH to yield (R)-2,3-dihydroxy-isovalerate. The chain is Ketol-acid reductoisomerase (NADP(+)) from Klebsiella pneumoniae (strain 342).